The primary structure comprises 249 residues: ATP synthase subunit a (249 aa).

6 helical membrane passes run 33–53 (YMLI…AQLV), 83–103 (FFPL…IGII), 113–133 (LIVT…YGVA), 139–159 (FFSI…VMFI), 188–208 (VFAG…WVGG), and 216–236 (VALY…FAIL).

The protein belongs to the ATPase A chain family. In terms of assembly, F-type ATPases have 2 components, CF(1) - the catalytic core - and CF(0) - the membrane proton channel. CF(1) has five subunits: alpha(3), beta(3), gamma(1), delta(1), epsilon(1). CF(0) has three main subunits: a(1), b(2) and c(9-12). The alpha and beta chains form an alternating ring which encloses part of the gamma chain. CF(1) is attached to CF(0) by a central stalk formed by the gamma and epsilon chains, while a peripheral stalk is formed by the delta and b chains.

It localises to the cell inner membrane. Key component of the proton channel; it plays a direct role in the translocation of protons across the membrane. This is ATP synthase subunit a from Bradyrhizobium diazoefficiens (strain JCM 10833 / BCRC 13528 / IAM 13628 / NBRC 14792 / USDA 110).